The following is a 976-amino-acid chain: Poly(ADP-ribose) glycohydrolase (976 aa).

M1 is subject to N-acetylmethionine. Residues 1-69 (MNAGPGCEPC…GRAGQHRGSA (69 aa)) form a disordered region. The tract at residues 1 to 456 (MNAGPGCEPC…LSPDKKWLGT (456 aa)) is A-domain. The Nuclear localization signal motif lies at 10-16 (CTKRPRW). The residue at position 22 (S22) is a Phosphoserine. Residues 37–46 (RVLDPKDAHV) are compositionally biased toward basic and acidic residues. S68 is subject to Phosphoserine. Residues 76–83 (QKTITSWM) carry the PIP-box (PCNA interacting peptide) motif. S133 and S137 each carry phosphoserine. Residue T139 is modified to Phosphothreonine. The segment at 183 to 350 (SNANIDRSPQ…PSRFQARDAD (168 aa)) is disordered. Basic and acidic residues-rich tracts occupy residues 191 to 206 (PQND…ENRD) and 222 to 233 (TTEDEQAREAKS). S197 carries the post-translational modification Phosphoserine. T199 carries the phosphothreonine modification. Phosphoserine is present on residues S261, S264, S286, S291, S298, S302, and S316. Residues 316–331 (SEADEETSPGFDEQED) show a composition bias toward acidic residues. A compositionally biased stretch (polar residues) spans 332–342 (GSSSQTANKPS). K340 is modified (N6-acetyllysine). S448 bears the Phosphoserine mark. The segment at 610–795 (QPIPLLKQKM…TEQYSEYTGY (186 aa)) is catalytic. 726-727 (IE) provides a ligand contact to substrate. The active site involves D737. Substrate-binding residues include N740 and Q754. Residues E755 and E756 contribute to the active site. Substrate is bound by residues Y795 and 869–874 (NWGCGA).

It belongs to the poly(ADP-ribose) glycohydrolase family. In terms of assembly, interacts with PCNA. Interacts with NUDT5. In terms of tissue distribution, ubiquitously expressed.

The protein resides in the nucleus. The protein localises to the cytoplasm. It localises to the mitochondrion. Its subcellular location is the mitochondrion matrix. The catalysed reaction is [(1''-&gt;2')-ADP-alpha-D-ribose](n) + H2O = [(1''-&gt;2')-ADP-alpha-D-ribose](n-1) + ADP-D-ribose. In terms of biological role, poly(ADP-ribose) glycohydrolase that degrades poly(ADP-ribose) by hydrolyzing the ribose-ribose bonds present in poly(ADP-ribose). PARG acts both as an endo- and exoglycosidase, releasing poly(ADP-ribose) of different length as well as ADP-ribose monomers. It is however unable to cleave the ester bond between the terminal ADP-ribose and ADP-ribosylated residues, leaving proteins that are mono-ADP-ribosylated. Poly(ADP-ribose) is synthesized after DNA damage is only present transiently and is rapidly degraded by PARG. Required to prevent detrimental accumulation of poly(ADP-ribose) upon prolonged replicative stress, while it is not required for recovery from transient replicative stress. Responsible for the prevalence of mono-ADP-ribosylated proteins in cells, thanks to its ability to degrade poly(ADP-ribose) without cleaving the terminal protein-ribose bond. Required for retinoid acid-dependent gene transactivation, probably by removing poly(ADP-ribose) from histone demethylase KDM4D, allowing chromatin derepression at RAR-dependent gene promoters. Involved in the synthesis of ATP in the nucleus, together with PARP1, NMNAT1 and NUDT5. Nuclear ATP generation is required for extensive chromatin remodeling events that are energy-consuming. The polypeptide is Poly(ADP-ribose) glycohydrolase (Homo sapiens (Human)).